The following is a 403-amino-acid chain: Beta-galactoside alpha-2,6-sialyltransferase 1 (403 aa).

Over 1 to 9 (MIHTNLKRK) the chain is Cytoplasmic. Residues 10-26 (FSCFVLVFLLFAIICVW) traverse the membrane as a helical; Signal-anchor for type II membrane protein segment. The Lumenal segment spans residues 27 to 403 (KKGSDYEALT…TLSGFRNNRC (377 aa)). 3 disulfides stabilise this stretch: Cys139–Cys403, Cys181–Cys332, and Cys350–Cys361. N-linked (GlcNAc...) asparagine glycosylation is found at Asn146 and Asn158. Residues Ser186, Asn209, Asn230, 319 to 321 (SSG), Cys350, Tyr351, Thr362, Tyr366, His367, and Lys373 contribute to the substrate site. Tyr366 carries the phosphotyrosine modification.

This sequence belongs to the glycosyltransferase 29 family. Monomer and homodimer. In terms of processing, N-glycosylated.

It localises to the golgi apparatus. It is found in the golgi stack membrane. The protein resides in the secreted. It catalyses the reaction a beta-D-galactoside + CMP-N-acetyl-beta-neuraminate = an N-acetyl-alpha-neuraminyl-(2-&gt;6)-beta-D-galactosyl derivative + CMP + H(+). Its pathway is protein modification; protein glycosylation. Functionally, transfers sialic acid from CMP-sialic acid to galactose-containing acceptor substrates. In Mus musculus (Mouse), this protein is Beta-galactoside alpha-2,6-sialyltransferase 1 (St6gal1).